A 122-amino-acid polypeptide reads, in one-letter code: Basic phospholipase A2 LmTX-II (122 aa).

6 disulfide bridges follow: Cys26–Cys115, Cys28–Cys44, Cys43–Cys95, Cys49–Cys122, Cys50–Cys88, and Cys75–Cys86. Residues Tyr27, Gly29, and Gly31 each contribute to the Ca(2+) site. The active site involves His47. Ca(2+) is bound at residue Asp48. The active site involves Asp89.

In terms of assembly, monomer. Ca(2+) is required as a cofactor. In terms of tissue distribution, expressed by the venom gland.

The protein localises to the secreted. It catalyses the reaction a 1,2-diacyl-sn-glycero-3-phosphocholine + H2O = a 1-acyl-sn-glycero-3-phosphocholine + a fatty acid + H(+). Its function is as follows. Snake venom phospholipase A2 (PLA2) that may display neurotoxic and myotoxic activities. May induce inflammatory edema by mechanisms involving mast cell activation and arachidonic acid metabolites. May increase plasma creatine kinase activity. PLA2 catalyzes the calcium-dependent hydrolysis of the 2-acyl groups in 3-sn-phosphoglycerides. In Lachesis muta muta (Bushmaster), this protein is Basic phospholipase A2 LmTX-II.